We begin with the raw amino-acid sequence, 124 residues long: UPF0102 protein MSMEG_2508/MSMEI_2448 (124 aa).

It belongs to the UPF0102 family.

The sequence is that of UPF0102 protein MSMEG_2508/MSMEI_2448 from Mycolicibacterium smegmatis (strain ATCC 700084 / mc(2)155) (Mycobacterium smegmatis).